The following is a 92-amino-acid chain: MTRSLGKGPFVANHLLKEIEILNFGGSEEVVVTWSRASTIVPVMIGHTIAIHNGREHLPIYITDRMVGHKLGEFAPTRTFRGHARNDKKSRR.

The protein belongs to the universal ribosomal protein uS19 family.

It localises to the plastid. Protein S19 forms a complex with S13 that binds strongly to the 16S ribosomal RNA. This Aneura mirabilis (Parasitic liverwort) protein is Small ribosomal subunit protein uS19c.